Here is a 200-residue protein sequence, read N- to C-terminus: Bombinin-like peptides 3 (200 aa).

The or 18 signal peptide spans 1-16; sequence MNFKYIVAVSILIASA. Phenylalanine amide is present on residues Phe-68 and Phe-129.

It belongs to the bombinin family. In terms of tissue distribution, expressed by the skin glands.

It is found in the secreted. In terms of biological role, has antimicrobial activity, but no hemolytic activity. Preference on killing Gram-negative non-enteric bacteria. This is Bombinin-like peptides 3 from Bombina orientalis (Oriental fire-bellied toad).